The following is a 235-amino-acid chain: Proteasome subunit alpha type-2 (235 aa).

Belongs to the peptidase T1A family. The 26S proteasome consists of a 20S proteasome core and two 19S regulatory subunits. The 20S proteasome core is composed of 28 subunits that are arranged in four stacked rings, resulting in a barrel-shaped structure. The two end rings are each formed by seven alpha subunits, and the two central rings are each formed by seven beta subunits. The catalytic chamber with the active sites is on the inside of the barrel.

Its subcellular location is the cytoplasm. The protein localises to the nucleus. Its function is as follows. The proteasome is a multicatalytic proteinase complex which is characterized by its ability to cleave peptides with Arg, Phe, Tyr, Leu, and Glu adjacent to the leaving group at neutral or slightly basic pH. The proteasome has an ATP-dependent proteolytic activity. This is Proteasome subunit alpha type-2 (PAB1) from Oryza sativa subsp. indica (Rice).